The primary structure comprises 82 residues: MATINVYVFAFIFLLTISVGSIEGRKLTKFTVTTSEEIRAGGSVLSSSPPTEPLESPPSHGVDTFRPTEPGHSPGIGHSVHN.

An N-terminal signal peptide occupies residues 1–24 (MATINVYVFAFIFLLTISVGSIEG). Residues 25–63 (RKLTKFTVTTSEEIRAGGSVLSSSPPTEPLESPPSHGVD) constitute a propeptide that is removed on maturation. Residues 40 to 82 (AGGSVLSSSPPTEPLESPPSHGVDTFRPTEPGHSPGIGHSVHN) form a disordered region. 3 positions are modified to hydroxyproline: P67, P70, and P74. Positions 79-82 (SVHN) are excised as a propeptide.

It belongs to the C-terminally encoded plant signaling peptide (CEP) family. In terms of assembly, interacts with the CEP receptor CEPR1. In terms of processing, the mature small signaling peptide is generated by proteolytic processing of the longer precursor. As to expression, mostly expressed in roots. Present in lateral roots (especially in vasculature), root-hypocotyl junction and cotyledons.

It is found in the secreted. The protein resides in the extracellular space. It localises to the apoplast. In terms of biological role, extracellular signaling peptide that represses primary root growth rate and significantly inhibits lateral root formation. Promotes shoot growth. Modulates leaf morphology. Regulates systemic nitrogen (N)-demand signaling. Mediates systemic up-regulation of genes involved in N uptake and assimilation pathways. This chain is Precursor of CEP3, found in Arabidopsis thaliana (Mouse-ear cress).